Consider the following 107-residue polypeptide: Inner membrane protein YiaW (107 aa).

Residues 1–6 are Cytoplasmic-facing; sequence MFLDYF. Residues 7–29 traverse the membrane as a helical segment; the sequence is ALGVLIFVFLVIFYGIIILHDIP. The Periplasmic portion of the chain corresponds to 30-43; that stretch reads YLIAKKRNHPHADA. The chain crosses the membrane as a helical span at residues 44-66; it reads IHVAGWVSLFTLHVIWPFLWIWA. At 67 to 107 the chain is on the cytoplasmic side; sequence TLYRPERGWGMQSHDSSVMQLQQRIAGLEKQLADIKSSSAE.

This sequence to E.coli YibI.

Its subcellular location is the cell inner membrane. This is Inner membrane protein YiaW (yiaW) from Escherichia coli O157:H7.